The primary structure comprises 283 residues: Protease HtpX (283 aa).

A run of 2 helical transmembrane segments spans residues 4-24 (ILLF…ILSV) and 33-53 (GGIL…SLFL). H139 lines the Zn(2+) pocket. Residue E140 is part of the active site. Zn(2+) is bound at residue H143. A run of 2 helical transmembrane segments spans residues 147–167 (GDMV…IFLS) and 190–210 (IYFL…SIIA). E218 contributes to the Zn(2+) binding site.

This sequence belongs to the peptidase M48B family. Requires Zn(2+) as cofactor.

The protein localises to the cell inner membrane. The polypeptide is Protease HtpX (Haemophilus influenzae (strain PittEE)).